The sequence spans 288 residues: Cell division protein ZipA (288 aa).

A topological domain (periplasmic) is located at residue methionine 1. The helical transmembrane segment at 2–22 (EIGLREWLIVIGIIVIAGILF) threads the bilayer. Over 23–288 (DGWRRMRGGK…ERRALTQRRG (266 aa)) the chain is Cytoplasmic. The tract at residues 48 to 138 (DEEETTSAEV…DDKPAQRITE (91 aa)) is disordered. Composition is skewed to basic and acidic residues over residues 64–77 (LDTH…EHDL), 85–105 (RDNK…KDEP), and 122–138 (ARDD…RITE).

This sequence belongs to the ZipA family. As to quaternary structure, interacts with FtsZ via their C-terminal domains.

The protein localises to the cell inner membrane. In terms of biological role, essential cell division protein that stabilizes the FtsZ protofilaments by cross-linking them and that serves as a cytoplasmic membrane anchor for the Z ring. Also required for the recruitment to the septal ring of downstream cell division proteins. The protein is Cell division protein ZipA of Pseudomonas syringae pv. tomato (strain ATCC BAA-871 / DC3000).